The sequence spans 486 residues: UDP-N-acetylmuramate--L-alanine ligase (486 aa).

ATP is bound at residue 129–135; the sequence is GTHGKTT.

Belongs to the MurCDEF family.

It is found in the cytoplasm. The catalysed reaction is UDP-N-acetyl-alpha-D-muramate + L-alanine + ATP = UDP-N-acetyl-alpha-D-muramoyl-L-alanine + ADP + phosphate + H(+). The protein operates within cell wall biogenesis; peptidoglycan biosynthesis. In terms of biological role, cell wall formation. The protein is UDP-N-acetylmuramate--L-alanine ligase of Vibrio vulnificus (strain CMCP6).